Reading from the N-terminus, the 316-residue chain is Ribosomal RNA small subunit methyltransferase H (316 aa).

S-adenosyl-L-methionine contacts are provided by residues 35-37 (SGH), D55, F84, D105, and Q112.

This sequence belongs to the methyltransferase superfamily. RsmH family.

The protein resides in the cytoplasm. It carries out the reaction cytidine(1402) in 16S rRNA + S-adenosyl-L-methionine = N(4)-methylcytidine(1402) in 16S rRNA + S-adenosyl-L-homocysteine + H(+). In terms of biological role, specifically methylates the N4 position of cytidine in position 1402 (C1402) of 16S rRNA. The protein is Ribosomal RNA small subunit methyltransferase H of Streptococcus pyogenes serotype M6 (strain ATCC BAA-946 / MGAS10394).